Here is a 91-residue protein sequence, read N- to C-terminus: DNA-directed RNA polymerase subunit omega (91 aa).

This sequence belongs to the RNA polymerase subunit omega family. As to quaternary structure, the RNAP catalytic core consists of 2 alpha, 1 beta, 1 beta' and 1 omega subunit. When a sigma factor is associated with the core the holoenzyme is formed, which can initiate transcription.

The enzyme catalyses RNA(n) + a ribonucleoside 5'-triphosphate = RNA(n+1) + diphosphate. Its function is as follows. Promotes RNA polymerase assembly. Latches the N- and C-terminal regions of the beta' subunit thereby facilitating its interaction with the beta and alpha subunits. The chain is DNA-directed RNA polymerase subunit omega from Pectobacterium carotovorum subsp. carotovorum (strain PC1).